A 161-amino-acid chain; its full sequence is Small ribosomal subunit protein uS9 (161 aa).

2 disordered regions span residues 1–28 (MAQISDSLDVAPESFSTETPNEEAPKAP) and 142–161 (KERKKAGLKKARKAPQFSKR).

This sequence belongs to the universal ribosomal protein uS9 family.

The polypeptide is Small ribosomal subunit protein uS9 (Clavibacter sepedonicus (Clavibacter michiganensis subsp. sepedonicus)).